We begin with the raw amino-acid sequence, 533 residues long: Glucose-6-phosphate isomerase (533 aa).

Glu-341 functions as the Proton donor in the catalytic mechanism. Residues His-372 and Lys-501 contribute to the active site.

It belongs to the GPI family.

The protein localises to the cytoplasm. The enzyme catalyses alpha-D-glucose 6-phosphate = beta-D-fructose 6-phosphate. It participates in carbohydrate biosynthesis; gluconeogenesis. Its pathway is carbohydrate degradation; glycolysis; D-glyceraldehyde 3-phosphate and glycerone phosphate from D-glucose: step 2/4. Functionally, catalyzes the reversible isomerization of glucose-6-phosphate to fructose-6-phosphate. In Cereibacter sphaeroides (strain KD131 / KCTC 12085) (Rhodobacter sphaeroides), this protein is Glucose-6-phosphate isomerase.